The primary structure comprises 614 residues: Replication protein E1 (614 aa).

Residues 1 to 25 (MASRVSDTGNGNENKENEGTVASDH) are disordered. Residues 13–25 (ENKENEGTVASDH) show a composition bias toward basic and acidic residues. Positions 88-90 (KRK) match the Nuclear localization signal motif. Residues Ser94 and Ser104 each carry the phosphoserine; by host modification. The Nuclear export signal signature appears at 103 to 112 (LSPRLAGVSL). The segment covering 136–146 (VEVSQLSSTPS) has biased composition (polar residues). The tract at residues 136 to 156 (VEVSQLSSTPSAPGPDIRLPK) is disordered. Residues 154–316 (LPKPSDIDLE…NQCVVSNQQT (163 aa)) form a DNA-binding region region. The SF3 helicase domain occupies 403–567 (NSWRGIVHFL…FPLKGNGQPL (165 aa)). ATP is bound at residue 443 to 450 (GPSDTGKS).

Belongs to the papillomaviridae E1 protein family. Can form hexamers. Interacts with E2 protein; this interaction increases E1 DNA binding specificity. Interacts with host DNA polymerase subunit POLA2. Interacts with host single stranded DNA-binding protein RPA1. Interacts with host TOP1; this interaction stimulates the enzymatic activity of TOP1. In terms of processing, phosphorylated.

It is found in the host nucleus. The catalysed reaction is Couples ATP hydrolysis with the unwinding of duplex DNA by translocating in the 3'-5' direction.. It carries out the reaction ATP + H2O = ADP + phosphate + H(+). In terms of biological role, ATP-dependent DNA 3'-5' helicase required for initiation of viral DNA replication. It forms a complex with the viral E2 protein. The E1-E2 complex binds to the replication origin which contains binding sites for both proteins. During the initial step, a dimer of E1 interacts with a dimer of protein E2 leading to a complex that binds the viral origin of replication with high specificity. Then, a second dimer of E1 displaces the E2 dimer in an ATP-dependent manner to form the E1 tetramer. Following this, two E1 monomers are added to each half of the site, which results in the formation of two E1 trimers on the viral ori. Subsequently, two hexamers will be created. The double hexamer acts as a bi-directional helicase machinery and unwinds the viral DNA and then recruits the host DNA polymerase to start replication. The protein is Replication protein E1 of Homo sapiens (Human).